A 343-amino-acid polypeptide reads, in one-letter code: Phenylalanine--tRNA ligase alpha subunit (343 aa).

Residue E258 coordinates Mg(2+).

The protein belongs to the class-II aminoacyl-tRNA synthetase family. Phe-tRNA synthetase alpha subunit type 1 subfamily. Tetramer of two alpha and two beta subunits. Requires Mg(2+) as cofactor.

Its subcellular location is the cytoplasm. It catalyses the reaction tRNA(Phe) + L-phenylalanine + ATP = L-phenylalanyl-tRNA(Phe) + AMP + diphosphate + H(+). In Symbiobacterium thermophilum (strain DSM 24528 / JCM 14929 / IAM 14863 / T), this protein is Phenylalanine--tRNA ligase alpha subunit.